The following is a 333-amino-acid chain: Fructose-1,6-bisphosphatase class 1 (333 aa).

Residues Glu92, Asp113, Leu115, and Asp116 each contribute to the Mg(2+) site. Substrate contacts are provided by residues 116 to 119, Asn209, Tyr242, and Lys272; that span reads DGSS. Glu278 lines the Mg(2+) pocket.

It belongs to the FBPase class 1 family. As to quaternary structure, homotetramer. Mg(2+) is required as a cofactor.

It localises to the cytoplasm. The catalysed reaction is beta-D-fructose 1,6-bisphosphate + H2O = beta-D-fructose 6-phosphate + phosphate. The protein operates within carbohydrate biosynthesis; Calvin cycle. This Chlorobaculum tepidum (strain ATCC 49652 / DSM 12025 / NBRC 103806 / TLS) (Chlorobium tepidum) protein is Fructose-1,6-bisphosphatase class 1.